The chain runs to 105 residues: DNA-directed RNA polymerases I and III subunit RPAC2 (105 aa).

Belongs to the archaeal Rpo11/eukaryotic RPB11/RPC19 RNA polymerase subunit family. As to quaternary structure, component of the RNA polymerase I (Pol I) and RNA polymerase III (Pol III) complexes consisting of at least 13 and 17 subunits, respectively.

Its subcellular location is the nucleus. DNA-dependent RNA polymerase catalyzes the transcription of DNA into RNA using the four ribonucleoside triphosphates as substrates. Common core component of RNA polymerases I and III which synthesize ribosomal RNA precursors and small RNAs, such as 5S rRNA and tRNAs, respectively. The sequence is that of DNA-directed RNA polymerases I and III subunit RPAC2 from Drosophila melanogaster (Fruit fly).